A 143-amino-acid polypeptide reads, in one-letter code: Large ribosomal subunit protein uL11 (143 aa).

This sequence belongs to the universal ribosomal protein uL11 family. Part of the ribosomal stalk of the 50S ribosomal subunit. Interacts with L10 and the large rRNA to form the base of the stalk. L10 forms an elongated spine to which L12 dimers bind in a sequential fashion forming a multimeric L10(L12)X complex. One or more lysine residues are methylated.

Functionally, forms part of the ribosomal stalk which helps the ribosome interact with GTP-bound translation factors. The chain is Large ribosomal subunit protein uL11 from Paraburkholderia xenovorans (strain LB400).